We begin with the raw amino-acid sequence, 152 residues long: Natriuretic peptides A (152 aa).

Positions 1 to 24 (MGSFSITKGFFLFLAFWLPGHIGA) are cleaved as a signal peptide. 2 propeptides span residues 25–122 (NPVY…AGPR) and 92–102 (DGGALGRGPWD). The tract at residues 54 to 104 (DEVMPPQALSEQTDEAGAALSSLSEVPPWTGEVNPSQRDGGALGRGPWDPS) is disordered. Serine 128 is modified (phosphoserine). A disulfide bond links cysteine 129 and cysteine 145. The tract at residues 146–150 (NSFRY) is important for degradation of atrial natriuretic peptide by IDE.

It belongs to the natriuretic peptide family. In terms of assembly, homodimer; disulfide-linked antiparallel dimer. Post-translationally, the precursor molecule is proteolytically cleaved by CORIN at Arg-122 to produce the atrial natriuretic peptide. Undergoes further proteolytic cleavage by unknown proteases to give rise to long-acting natriuretic peptide, vessel dilator and kaliuretic peptide. Additional processing gives rise to the auriculin and atriopeptin peptides. In the kidneys, alternative processing by an unknown protease results in the peptide urodilatin. Cleavage by MME initiates degradation of the factor and thereby regulates its activity. Degradation by IDE results in reduced activation of NPR1 (in vitro). During IDE degradation, the resulting products can temporarily stimulate NPR2 to produce cGMP, before the fragments are completely degraded and inactivated by IDE (in vitro). In terms of processing, degraded by IDE. Post-translationally, phosphorylation on Ser-128 decreases vasorelaxant activity. As to expression, high levels of expression in the atria compared to the ventricles. Very low levels of expression detected in extracardiac tissues such as the brain, hypothalamus, pituitary, lung and aorta. In terms of tissue distribution, atria (at protein level). High levels of expression in the atria with very low levels of expression in the ventricles (at protein level). Relatively low levels of expression detected in the brain compared to the atria (at protein level).

It localises to the secreted. The protein resides in the perikaryon. The protein localises to the cell projection. Its function is as follows. Hormone that plays a key role in mediating cardio-renal homeostasis, and is involved in vascular remodeling and regulating energy metabolism. Acts by specifically binding and stimulating NPR1 to produce cGMP, which in turn activates effector proteins, such as PRKG1, that drive various biological responses. Regulates vasodilation, natriuresis, diuresis and aldosterone synthesis and is therefore essential for regulating blood pressure, controlling the extracellular fluid volume and maintaining the fluid-electrolyte balance. Also involved in inhibiting cardiac remodeling and cardiac hypertrophy by inducing cardiomyocyte apoptosis and attenuating the growth of cardiomyocytes and fibroblasts. Plays a role in female pregnancy by promoting trophoblast invasion and spiral artery remodeling in uterus, and thus prevents pregnancy-induced hypertension. In adipose tissue, acts in various cGMP- and PKG-dependent pathways to regulate lipid metabolism and energy homeostasis. This includes up-regulating lipid metabolism and mitochondrial oxygen utilization by activating the AMP-activated protein kinase (AMPK), and increasing energy expenditure by acting via MAPK11 to promote the UCP1-dependent thermogenesis of brown adipose tissue. Binds the clearance receptor NPR3 which removes the hormone from circulation. In terms of biological role, may have a role in cardio-renal homeostasis through regulation of natriuresis, diuresis, vasodilation, and inhibiting aldosterone synthesis. In vitro, promotes the production of cGMP and induces vasodilation. May promote natriuresis, at least in part, by enhancing prostaglandin E2 synthesis resulting in the inhibition of renal Na+-K+-ATPase. However reports on the involvement of this peptide in mammal blood volume and blood pressure homeostasis are conflicting; according to a report, in vivo it is not sufficient to activate cGMP and does not inhibit collecting duct transport nor effect diuresis and natriuresis. Appears to bind to specific receptors that are distinct from the receptors bound by atrial natriuretic peptide and vessel dilator. Possibly enhances protein excretion in urine by decreasing proximal tubular protein reabsorption. Functionally, may have a role in cardio-renal homeostasis through regulation of natriuresis, diuresis, and vasodilation. In vitro, promotes the production of cGMP and induces vasodilation. May promote natriuresis, at least in part, by enhancing prostaglandin E2 synthesis resulting in the inhibition of renal Na+-K+-ATPase. However reports on the involvement of this peptide in mammal blood volume and blood pressure homeostasis are conflicting; according to a report, in vivo it is not sufficient to activate cGMP and does not inhibit collecting duct transport nor effect diuresis and natriuresis. Appears to bind to specific receptors that are distinct from the receptors bound by the atrial natriuretic and long-acting natriuretic peptides. Possibly functions in protein excretion in urine by maintaining the integrity of the proximal tubules and enhancing protein excretion by decreasing proximal tubular protein reabsorption. May have a role in cardio-renal homeostasis through regulation of diuresis and inhibiting aldosterone synthesis. In vitro, promotes the production of cGMP and induces vasodilation. May promote natriuresis, at least in part, by enhancing prostaglandin E2 synthesis resulting in the inhibition of renal Na+-K+-ATPase. May have a role in potassium excretion but not sodium excretion (natriuresis). Possibly enhances protein excretion in urine by decreasing proximal tubular protein reabsorption. Its function is as follows. Hormone produced in the kidneys that appears to be important for maintaining cardio-renal homeostasis. Mediates vasodilation, natriuresis and diuresis primarily in the renal system, in order to maintain the extracellular fluid volume and control the fluid-electrolyte balance. Specifically binds and stimulates cGMP production by renal transmembrane receptors, likely NPR1. Urodilatin not ANP, may be the natriuretic peptide responsible for the regulation of sodium and water homeostasis in the kidney. In terms of biological role, may have a role in cardio-renal homeostasis through regulation of natriuresis and vasodilation. In vivo promotes natriuresis and in vitro, vasodilates renal artery strips. Functionally, may have a role in cardio-renal homeostasis through regulation of regulation of natriuresis and vasodilation. In vivo promotes natriuresis. In vitro, vasodilates intestinal smooth muscle but not smooth muscle strips. May have a role in cardio-renal homeostasis through regulation of natriuresis and vasodilation. In vivo promotes natriuresis. In vitro, selectively vasodilates intestinal and vascular smooth muscle strips. Its function is as follows. May have a role in cardio-renal homeostasis through regulation of natriuresis and vasodilation. In vivo promotes natriuresis. In vitro, selectively vasodilates intestinal smooth muscle but not vascular smooth muscle strips. The polypeptide is Natriuretic peptides A (Nppa) (Rattus norvegicus (Rat)).